We begin with the raw amino-acid sequence, 600 residues long: Aspartate--tRNA(Asp/Asn) ligase (600 aa).

Residue glutamate 174 participates in L-aspartate binding. The segment at 198-201 (QLFK) is aspartate. Position 220 (arginine 220) interacts with L-aspartate. Residues 220–222 (RDE) and glutamine 229 each bind ATP. Histidine 457 provides a ligand contact to L-aspartate. Residue glutamate 491 coordinates ATP. L-aspartate is bound at residue arginine 498. Residue 543 to 546 (GLDR) coordinates ATP.

Belongs to the class-II aminoacyl-tRNA synthetase family. Type 1 subfamily. In terms of assembly, homodimer.

It localises to the cytoplasm. The catalysed reaction is tRNA(Asx) + L-aspartate + ATP = L-aspartyl-tRNA(Asx) + AMP + diphosphate. Functionally, aspartyl-tRNA synthetase with relaxed tRNA specificity since it is able to aspartylate not only its cognate tRNA(Asp) but also tRNA(Asn). Reaction proceeds in two steps: L-aspartate is first activated by ATP to form Asp-AMP and then transferred to the acceptor end of tRNA(Asp/Asn). This chain is Aspartate--tRNA(Asp/Asn) ligase, found in Burkholderia orbicola (strain MC0-3).